A 483-amino-acid chain; its full sequence is MTQGPLTTEAGAPVADNQNSETAGVGGPVLVQDQLLLEKLAHFNRERIPERVVHARGAGAYGTFTLTRDVSRWTRAAFLSEVGKRTETFLRFSTVAGSLGAADAVRDPRGWALKFYTEEGNYDLVGNNTPVFFIKDAIKFPDFIHTQKRDPYTGSQEADNVWDFWGLSPESTHQVTWLFGDRGIPASYRHMNGYGSHTYQWNNEAGEVFWVKYHFKTDQGIKNLTQDEANRLAGEDPDSHQRDLREAIERGDFPTWTVQVQIMPAADAAGYRFNPFDLTKVWPHEDYPPVEIGTLELNRNPENIFAEVEQSIFSPAHFVPGIGPSPDKMLQGRLFAYGDAHRYRVGINADHLPVNRPHATEARTHSRDGFLYDGRHKGAKNYEPNSFGGPVQTDRPLWQPTPVTGVTGDHAAPSHAEDDDFTQAGDLYRLMSEDEKGRLIDNLSGFIAKVSRDDIAERAIGNFRRADEDFGKRLEAAVQALRG.

Positions 1–24 are disordered; it reads MTQGPLTTEAGAPVADNQNSETAG. Active-site residues include His54 and Asn127. Tyr337 contributes to the heme binding site.

It belongs to the catalase family.

It carries out the reaction 2 H2O2 = O2 + 2 H2O. This is Bromoperoxidase-catalase (bca) from Streptomyces venezuelae (strain ATCC 10712 / CBS 650.69 / DSM 40230 / JCM 4526 / NBRC 13096 / PD 04745).